We begin with the raw amino-acid sequence, 69 residues long: Conotoxin Eb6.21 (69 aa).

Positions Val1 to Ala17 are cleaved as a signal peptide. A propeptide spanning residues Glu18–Arg41 is cleaved from the precursor. Cystine bridges form between Cys43–Cys57, Cys50–Cys61, and Cys56–Cys68.

Belongs to the conotoxin O1 superfamily. Expressed by the venom duct.

The protein localises to the secreted. The protein is Conotoxin Eb6.21 (E1) of Conus ebraeus (Hebrew cone).